The following is a 76-amino-acid chain: Conotoxin Bu28 (76 aa).

A signal peptide spans 1–24; that stretch reads MTSVQSATCCCLLWLVLCVQLVTP. A propeptide spanning residues 25–39 is cleaved from the precursor; that stretch reads DSPATAQLSRHLTAR. Disulfide bonds link Cys50–Cys63 and Cys54–Cys65. Arg69 bears the Arginine amide mark. The propeptide occupies 71 to 76; it reads VVSSSI.

It belongs to the conotoxin J superfamily. In terms of tissue distribution, expressed by the venom duct.

It localises to the secreted. Highly inhibits both nicotinic acetylcholine receptors (neuronal (alpha-3/beta-4) and muscular (alpha-1/beta-1/epsilon/delta) subtypes) and the voltage-gated potassium channel Kv1.6/KCNA6 subtype. This is Conotoxin Bu28 from Conus bullatus (Bubble cone).